The primary structure comprises 315 residues: Ribosomal RNA small subunit methyltransferase H (315 aa).

Residues 35-37 (AGH), Asp-55, Phe-84, Asp-105, and Gln-112 each bind S-adenosyl-L-methionine.

This sequence belongs to the methyltransferase superfamily. RsmH family.

The protein localises to the cytoplasm. It catalyses the reaction cytidine(1402) in 16S rRNA + S-adenosyl-L-methionine = N(4)-methylcytidine(1402) in 16S rRNA + S-adenosyl-L-homocysteine + H(+). Its function is as follows. Specifically methylates the N4 position of cytidine in position 1402 (C1402) of 16S rRNA. This Streptococcus agalactiae serotype Ia (strain ATCC 27591 / A909 / CDC SS700) protein is Ribosomal RNA small subunit methyltransferase H.